Reading from the N-terminus, the 273-residue chain is Probable NAD(P)H dehydrogenase (quinone) FQR1-like 2 (273 aa).

Positions methionine 1–proline 60 are disordered. The span at threonine 49 to proline 60 shows a compositional bias: low complexity. The Flavodoxin-like domain maps to isoleucine 75–methionine 263. FMN-binding positions include serine 81–histidine 85, phenylalanine 183–glycine 236, and histidine 207. Position 83 (tyrosine 83) interacts with NAD(+).

Belongs to the WrbA family. The cofactor is FMN.

Its subcellular location is the cell membrane. It carries out the reaction a quinone + NADH + H(+) = a quinol + NAD(+). It catalyses the reaction a quinone + NADPH + H(+) = a quinol + NADP(+). Its function is as follows. Catalyzes the transfer of electrons from NADH and NADPH to reduce quinone to the hydroquinone state. The chain is Probable NAD(P)H dehydrogenase (quinone) FQR1-like 2 from Arabidopsis thaliana (Mouse-ear cress).